We begin with the raw amino-acid sequence, 1054 residues long: Bifunctional cytochrome P450/NADPH--P450 reductase 2 (1054 aa).

Residues 1-475 are cytochrome P450; that stretch reads MKQASAIPQP…QADIKAETKP (475 aa). A heme-binding site is contributed by cysteine 403. Positions 462–480 are enriched in basic and acidic residues; it reads QRKEQADIKAETKPKETKP. Residues 462-482 are disordered; that stretch reads QRKEQADIKAETKPKETKPKH. The interval 476–1053 is NADPH--P450 reductase; it reads KETKPKHGTP…RRYVKDVWTG (578 aa). Residues 486–625 enclose the Flavodoxin-like domain; it reads LLVLFGSNLG…HRESWENRFW (140 aa). Residues 492-497, 539-542, 573-575, and 581-583 contribute to the FMN site; these read SNLGTA, SYNG, CGN, and TYQ. Residues 663 to 896 enclose the FAD-binding FR-type domain; sequence YGAFEGIVLE…RTPQSGFQMP (234 aa).

This sequence in the N-terminal section; belongs to the cytochrome P450 family. It depends on FAD as a cofactor. FMN serves as cofactor. The cofactor is heme b.

Its subcellular location is the cytoplasm. It carries out the reaction an organic molecule + reduced [NADPH--hemoprotein reductase] + O2 = an alcohol + oxidized [NADPH--hemoprotein reductase] + H2O + H(+). The catalysed reaction is 2 oxidized [cytochrome P450] + NADPH = 2 reduced [cytochrome P450] + NADP(+) + H(+). Its function is as follows. Functions as a fatty acid monooxygenase. Catalyzes hydroxylation of a range of medium to long-chain fatty acids, with a preference for long-chain unsaturated and branched-chain fatty acids over saturated fatty acids. Hydroxylation of myristic acid occurs mainly at the omega-2 and omega-3 positions, in approximately equal proportions. Also displays a NADPH-dependent reductase activity in the C-terminal domain, which allows electron transfer from NADPH to the heme iron of the cytochrome P450 N-terminal domain. This is Bifunctional cytochrome P450/NADPH--P450 reductase 2 from Bacillus subtilis (strain 168).